Consider the following 523-residue polypeptide: Probable endopeptidase p60 (523 aa).

Positions 1 to 27 (MNMKKATIAATAGIAVTAFAAPTIASA) are cleaved as a signal peptide. A LysM 1 domain is found at 28-71 (STVVVEAGDTLWGIAQDNGTTVDALKKANKLTTDKIVPGQKLQV). The 65-residue stretch at 78-142 (KTEKSVSATW…VNGKYLGNAV (65 aa)) folds into the SH3b domain. Residues 146–188 (PSATPEVKQEETTQAAPAQQTKTEVKQATPAATTEKDAVETKT) form a disordered region. Residues 157 to 167 (TTQAAPAQQTK) are compositionally biased toward low complexity. The LysM 2 domain maps to 198–241 (TTHTVKSGDTIWALSVKYGASVQDLMSWNNLSSSSIYVGQNIAV). 2 stretches are compositionally biased toward low complexity: residues 251–282 (PKAE…TTTT) and 290–318 (EKQT…TNAS). Disordered regions lie at residues 251–323 (PKAE…YTVK) and 367–408 (ATNT…SSSA). In terms of domain architecture, LysM 3 spans 318 to 361 (SSYTVKSGDTLGKIASTFGTTVSKIKALNGLTSDNLQVGDVLKV). The region spanning 405 to 523 (SSSASAIIAE…GQYLVGFGRV (119 aa)) is the NlpC/P60 domain. Cys-435 serves as the catalytic Nucleophile. His-485 functions as the Proton acceptor in the catalytic mechanism. Asn-497 is an active-site residue.

This sequence belongs to the peptidase C40 family.

In terms of biological role, this major extracellular protein may be involved in the invasion of non-professional phagocytic cells by Listeria. This chain is Probable endopeptidase p60 (iap), found in Listeria seeligeri.